The following is a 363-amino-acid chain: Chorismate synthase (363 aa).

Positions 48 and 54 each coordinate NADP(+). FMN is bound by residues 131–133 (RSS), 244–245 (NA), glycine 288, 303–307 (KPTSS), and arginine 329.

It belongs to the chorismate synthase family. Homotetramer. It depends on FMNH2 as a cofactor.

It carries out the reaction 5-O-(1-carboxyvinyl)-3-phosphoshikimate = chorismate + phosphate. It functions in the pathway metabolic intermediate biosynthesis; chorismate biosynthesis; chorismate from D-erythrose 4-phosphate and phosphoenolpyruvate: step 7/7. Its function is as follows. Catalyzes the anti-1,4-elimination of the C-3 phosphate and the C-6 proR hydrogen from 5-enolpyruvylshikimate-3-phosphate (EPSP) to yield chorismate, which is the branch point compound that serves as the starting substrate for the three terminal pathways of aromatic amino acid biosynthesis. This reaction introduces a second double bond into the aromatic ring system. In Maricaulis maris (strain MCS10) (Caulobacter maris), this protein is Chorismate synthase.